Reading from the N-terminus, the 315-residue chain is Methionyl-tRNA formyltransferase (315 aa).

113–116 (SLLP) serves as a coordination point for (6S)-5,6,7,8-tetrahydrofolate.

Belongs to the Fmt family.

It carries out the reaction L-methionyl-tRNA(fMet) + (6R)-10-formyltetrahydrofolate = N-formyl-L-methionyl-tRNA(fMet) + (6S)-5,6,7,8-tetrahydrofolate + H(+). Attaches a formyl group to the free amino group of methionyl-tRNA(fMet). The formyl group appears to play a dual role in the initiator identity of N-formylmethionyl-tRNA by promoting its recognition by IF2 and preventing the misappropriation of this tRNA by the elongation apparatus. The sequence is that of Methionyl-tRNA formyltransferase from Escherichia coli (strain SE11).